The sequence spans 611 residues: Inhibitor of apoptosis protein (611 aa).

BIR repeat units follow at residues 30–97 (ELYR…CSFV), 176–242 (EEAR…CPFV), and 262–329 (HEAR…CEYL). Zn(2+) is bound by residues Cys299, Cys302, His319, and Cys326. Residues 446–536 (VASDDLSLIR…VLYKDLFVEK (91 aa)) enclose the CARD domain. An RING-type zinc finger spans residues 564-599 (CKVCMDKEVSIVFIPCGHLVVCKECAPSLRKCPICR).

The protein belongs to the IAP family. As to expression, cells of the T-lymphocyte lineage. Found in both cortical and medullary cells of the thymus. Expressed at relatively high levels also in spleen, bursa, intestine and lung and at very low levels in testis, brain and skeletal muscle.

The protein resides in the nucleus. It localises to the cytoplasm. Its function is as follows. Apoptotic suppressor. In Gallus gallus (Chicken), this protein is Inhibitor of apoptosis protein (ITA).